Consider the following 250-residue polypeptide: Orotidine 5'-phosphate decarboxylase (250 aa).

Substrate is bound by residues D9, K40, 67–76, T132, R190, Q204, G224, and R225; that span reads DLKFHDIPNT. The Proton donor role is filled by K69.

It belongs to the OMP decarboxylase family. Type 1 subfamily. In terms of assembly, homodimer.

It catalyses the reaction orotidine 5'-phosphate + H(+) = UMP + CO2. It participates in pyrimidine metabolism; UMP biosynthesis via de novo pathway; UMP from orotate: step 2/2. Functionally, catalyzes the decarboxylation of orotidine 5'-monophosphate (OMP) to uridine 5'-monophosphate (UMP). The polypeptide is Orotidine 5'-phosphate decarboxylase (Nitratidesulfovibrio vulgaris (strain DSM 19637 / Miyazaki F) (Desulfovibrio vulgaris)).